The sequence spans 564 residues: Proline--tRNA ligase (564 aa).

Belongs to the class-II aminoacyl-tRNA synthetase family. ProS type 1 subfamily. In terms of assembly, homodimer.

It localises to the cytoplasm. It catalyses the reaction tRNA(Pro) + L-proline + ATP = L-prolyl-tRNA(Pro) + AMP + diphosphate. Its function is as follows. Catalyzes the attachment of proline to tRNA(Pro) in a two-step reaction: proline is first activated by ATP to form Pro-AMP and then transferred to the acceptor end of tRNA(Pro). As ProRS can inadvertently accommodate and process non-cognate amino acids such as alanine and cysteine, to avoid such errors it has two additional distinct editing activities against alanine. One activity is designated as 'pretransfer' editing and involves the tRNA(Pro)-independent hydrolysis of activated Ala-AMP. The other activity is designated 'posttransfer' editing and involves deacylation of mischarged Ala-tRNA(Pro). The misacylated Cys-tRNA(Pro) is not edited by ProRS. The polypeptide is Proline--tRNA ligase (Xanthomonas axonopodis pv. citri (strain 306)).